Consider the following 257-residue polypeptide: UPF0246 protein SO_3540 (257 aa).

The protein belongs to the UPF0246 family.

This is UPF0246 protein SO_3540 from Shewanella oneidensis (strain ATCC 700550 / JCM 31522 / CIP 106686 / LMG 19005 / NCIMB 14063 / MR-1).